The chain runs to 435 residues: Glutamyl-tRNA reductase (435 aa).

Residues 49–52 (TCNR), S118, 123–125 (EPQ), and Q129 each bind substrate. The active-site Nucleophile is the C50. 203–208 (GAGETI) lines the NADP(+) pocket.

It belongs to the glutamyl-tRNA reductase family. As to quaternary structure, homodimer.

The catalysed reaction is (S)-4-amino-5-oxopentanoate + tRNA(Glu) + NADP(+) = L-glutamyl-tRNA(Glu) + NADPH + H(+). It participates in porphyrin-containing compound metabolism; protoporphyrin-IX biosynthesis; 5-aminolevulinate from L-glutamyl-tRNA(Glu): step 1/2. In terms of biological role, catalyzes the NADPH-dependent reduction of glutamyl-tRNA(Glu) to glutamate 1-semialdehyde (GSA). The chain is Glutamyl-tRNA reductase from Glaesserella parasuis serovar 5 (strain SH0165) (Haemophilus parasuis).